The sequence spans 382 residues: Glutamine synthetase cytosolic isozyme (382 aa).

Positions 36-118 (GKICAEYVWI…VMCDCYEPPK (83 aa)) constitute a GS beta-grasp domain. The 248-residue stretch at 135–382 (TRFACAEVME…RLIVETTILL (248 aa)) folds into the GS catalytic domain.

Belongs to the glutamine synthetase family. In terms of assembly, homooctamer.

Its subcellular location is the cytoplasm. It carries out the reaction L-glutamate + NH4(+) + ATP = L-glutamine + ADP + phosphate + H(+). The polypeptide is Glutamine synthetase cytosolic isozyme (GLN1) (Chlamydomonas reinhardtii (Chlamydomonas smithii)).